A 257-amino-acid chain; its full sequence is Global transcriptional regulator CodY (257 aa).

The tract at residues 1-155 is GAF domain; it reads MSLLSKTREL…AATVIGMEIL (155 aa). Residues 203–222 constitute a DNA-binding region (H-T-H motif); the sequence is ASKVADRVGITRSVIVNALR.

The protein belongs to the CodY family.

It is found in the cytoplasm. In terms of biological role, DNA-binding global transcriptional regulator which is involved in the adaptive response to starvation and acts by directly or indirectly controlling the expression of numerous genes in response to nutrient availability. During rapid exponential growth, CodY is highly active and represses genes whose products allow adaptation to nutrient depletion. The protein is Global transcriptional regulator CodY of Staphylococcus saprophyticus subsp. saprophyticus (strain ATCC 15305 / DSM 20229 / NCIMB 8711 / NCTC 7292 / S-41).